The chain runs to 227 residues: Apoptosis regulator OPG045 (227 aa).

Belongs to the orthopoxvirus OPG045 family. In terms of assembly, homodimer. Interacts with host pro-apoptotic protein BCL2L11 (via BH3 domain). Interacts with host NLRP1. Interacts with host BAK.

Its subcellular location is the host mitochondrion outer membrane. The protein localises to the host cytoplasm. Plays a role in evading host innate immune response by inhibiting host inflammasome activation. Interacts with and inhibits NLR-mediated interleukin-1 beta/IL1B production in infected cells. At the host mitochondria outer membrane, interacts with the BH3 domain of host BAK and prevents BAK from binding active BAX. In turn, host apoptosis is inhibited. The sequence is that of Apoptosis regulator OPG045 (OPG045) from Oryctolagus cuniculus (Rabbit).